Consider the following 405-residue polypeptide: Replication factor C large subunit (405 aa).

47-54 (GPPGVGKT) provides a ligand contact to ATP.

It belongs to the activator 1 small subunits family. RfcL subfamily. As to quaternary structure, heteromultimer composed of small subunits (RfcS) and large subunits (RfcL).

Its function is as follows. Part of the RFC clamp loader complex which loads the PCNA sliding clamp onto DNA. The sequence is that of Replication factor C large subunit from Saccharolobus islandicus (strain L.S.2.15 / Lassen #1) (Sulfolobus islandicus).